Reading from the N-terminus, the 256-residue chain is Ciliary microtubule associated protein 1A (256 aa).

STPGR repeat units lie at residues 66 to 92 (PGPG…IYGR), 181 to 206 (PGPG…MTAR), and 217 to 242 (PGPG…FGIR). The disordered stretch occupies residues 91 to 115 (GRPRDISSFRTPGPGSYSPERAGKS).

It belongs to the CIMAP family.

The protein localises to the cytoplasm. It localises to the cytoskeleton. Its subcellular location is the flagellum axoneme. Its function is as follows. Outer dense fibers are filamentous structures located on the outside of the axoneme in the midpiece and principal piece of the mammalian sperm tail. May help to maintain the passive elastic structures and elastic recoil of the sperm tail. This chain is Ciliary microtubule associated protein 1A (cimap1a), found in Xenopus laevis (African clawed frog).